A 147-amino-acid chain; its full sequence is Large ribosomal subunit protein bL9 (147 aa).

Belongs to the bacterial ribosomal protein bL9 family.

In terms of biological role, binds to the 23S rRNA. The protein is Large ribosomal subunit protein bL9 of Nitratiruptor sp. (strain SB155-2).